The chain runs to 356 residues: Glucose 1-dehydrogenase 2 (356 aa).

D38 provides a ligand contact to Zn(2+). S40 provides a ligand contact to substrate. Residues H64 and E65 each coordinate Zn(2+). Residues E114 and E150 each contribute to the substrate site. Position 150 (E150) interacts with Zn(2+). NADP(+)-binding positions include 181-184 (NGNL), 206-207 (RR), and 301-303 (VVN). N303 contributes to the substrate binding site.

Belongs to the zinc-containing alcohol dehydrogenase family. Glucose 1-dehydrogenase subfamily. Zn(2+) is required as a cofactor.

The enzyme catalyses D-glucose + NAD(+) = D-glucono-1,5-lactone + NADH + H(+). It catalyses the reaction D-glucose + NADP(+) = D-glucono-1,5-lactone + NADPH + H(+). Its function is as follows. Catalyzes the NAD(P)(+)-dependent oxidation of D-glucose to D-gluconate via gluconolactone. Can utilize both NAD(+) and NADP(+) as electron acceptor. Is involved in the degradation of glucose through a modified Entner-Doudoroff pathway. The sequence is that of Glucose 1-dehydrogenase 2 from Haloterrigena turkmenica (strain ATCC 51198 / DSM 5511 / JCM 9101 / NCIMB 13204 / VKM B-1734 / 4k) (Halococcus turkmenicus).